A 1888-amino-acid chain; its full sequence is Zinc finger protein 106 (1888 aa).

A C2H2-type 1; atypical zinc finger spans residues 5 to 29; that stretch reads RKCILCHIVYGSKKEMDEHMRSMLH. A C2H2-type 2; atypical zinc finger spans residues 43–67; sequence HECRVCRVTEVGLSAYAKHISGQLH. A disordered region spans residues 68-187; that stretch reads KDNVDAQERE…GPRGSSVWHK (120 aa). Residues 75–89 are compositionally biased toward acidic residues; it reads EREDDGKEEEEEEYF. 3 stretches are compositionally biased toward basic and acidic residues: residues 90 to 108, 118 to 138, and 150 to 160; these read DKEL…RQDE, SDDR…DRES, and PQRDWKWEKDG. Lys-91 participates in a covalent cross-link: Glycyl lysine isopeptide (Lys-Gly) (interchain with G-Cter in SUMO2). Lys-155 participates in a covalent cross-link: Glycyl lysine isopeptide (Lys-Gly) (interchain with G-Cter in SUMO2). Residues 161–175 show a composition bias toward polar residues; that stretch reads FNSTRKNSFPHSLRN. Glycyl lysine isopeptide (Lys-Gly) (interchain with G-Cter in SUMO2) cross-links involve residues Lys-265 and Lys-309. 2 disordered regions span residues 287 to 326 and 338 to 362; these read KKSN…DTFP and RESQ…TKAR. Basic and acidic residues predominate over residues 296-311; sequence SQERCKWQRQDRDKAA. Positions 342–357 are enriched in polar residues; it reads TTKQTDTAASKINGKN. Residues Lys-375, Lys-384, Lys-390, Lys-435, Lys-469, and Lys-479 each participate in a glycyl lysine isopeptide (Lys-Gly) (interchain with G-Cter in SUMO2) cross-link. 2 disordered regions span residues 410–437 and 453–525; these read KPVD…HKAI and TEQS…TSKS. Residues 481 to 491 are compositionally biased toward basic residues; it reads GPHKQNLKNRS. Polar residues predominate over residues 507 to 525; the sequence is LLNTSTLEGSHGSSYTSKS. Residues Lys-524, Lys-534, and Lys-544 each participate in a glycyl lysine isopeptide (Lys-Gly) (interchain with G-Cter in SUMO2) cross-link. Residues 537–617 form a disordered region; the sequence is KTVSGTQKEP…SAMTSDAENH (81 aa). Polar residues predominate over residues 551–572; the sequence is NNTSQKAQDTVLQCPKTLQNPL. Lys-577 participates in a covalent cross-link: Glycyl lysine isopeptide (Lys-Gly) (interchain with G-Cter in SUMO2). The span at 577-593 shows a compositional bias: basic and acidic residues; the sequence is KRMENDAKESSVEESAK. The segment covering 597 to 613 has biased composition (polar residues); the sequence is SIESQPHSAGNSAMTSD. Residue Lys-620 forms a Glycyl lysine isopeptide (Lys-Gly) (interchain with G-Cter in SUMO2) linkage. Residues 635–661 form a disordered region; that stretch reads STHTVDKEQGSQIPGTPENLSTSPRNS. Residues 644-661 show a composition bias toward polar residues; that stretch reads GSQIPGTPENLSTSPRNS. Residues Ser-657 and Ser-677 each carry the phosphoserine modification. Residues Lys-687, Lys-700, Lys-721, Lys-738, Lys-758, Lys-792, and Lys-824 each participate in a glycyl lysine isopeptide (Lys-Gly) (interchain with G-Cter in SUMO2) cross-link. Positions 696–728 are disordered; it reads NNLVKSDGPFETESFEDTSLDTELQKPDLNNQP. Phosphoserine occurs at positions 876, 878, 881, and 909. The disordered stretch occupies residues 894–920; the sequence is TGEGTGKENEAQQSPSPNTALSAAQSQ. Residues 904–920 are compositionally biased toward polar residues; it reads AQQSPSPNTALSAAQSQ. A Glycyl lysine isopeptide (Lys-Gly) (interchain with G-Cter in SUMO2) cross-link involves residue Lys-921. Ser-953 carries the phosphoserine modification. Basic and acidic residues predominate over residues 968–986; it reads ARDLHSQERSTPLSERHAQ. Disordered stretches follow at residues 968–1064, 1281–1461, and 1468–1487; these read ARDL…ERSQ, EQGN…SKKD, and QNPI…TSEL. Low complexity predominate over residues 992–1008; the sequence is GNSLSSNASSGHAVSSL. Positions 1013 to 1022 are enriched in polar residues; it reads TDSSCTSGAE. Thr-1036 is subject to Phosphothreonine. Residues Ser-1040, Ser-1041, and Ser-1046 each carry the phosphoserine modification. Residues 1050 to 1060 show a composition bias toward basic residues; the sequence is KNKRRKIKGKK. A compositionally biased stretch (polar residues) spans 1281 to 1296; the sequence is EQGNSRSKGNSPSCQS. Phosphoserine is present on residues Ser-1291, Ser-1293, and Ser-1296. Residue Lys-1310 forms a Glycyl lysine isopeptide (Lys-Gly) (interchain with G-Cter in SUMO2) linkage. Residues 1312–1321 show a composition bias toward low complexity; sequence SSGSEACSSS. The residue at position 1313 (Ser-1313) is a Phosphoserine. Lys-1335 is covalently cross-linked (Glycyl lysine isopeptide (Lys-Gly) (interchain with G-Cter in SUMO2)). Positions 1338 to 1354 are enriched in polar residues; that stretch reads QSPADQPEQQAESTLAS. Ser-1339 carries the phosphoserine modification. A compositionally biased stretch (basic residues) spans 1360-1373; the sequence is SKKKKKLRKKKTLR. At Ser-1381 the chain carries Phosphoserine. Thr-1383 bears the Phosphothreonine mark. Glycyl lysine isopeptide (Lys-Gly) (interchain with G-Cter in SUMO2) cross-links involve residues Lys-1391, Lys-1403, Lys-1406, and Lys-1460. Over residues 1450-1461 the composition is skewed to basic and acidic residues; sequence GDEKPDSPSKKD. Residues 1470-1487 are compositionally biased toward polar residues; it reads PIETSRSGCDEVSSTSEL. The residue at position 1474 (Ser-1474) is a Phosphoserine. Glycyl lysine isopeptide (Lys-Gly) (interchain with G-Cter in SUMO2) cross-links involve residues Lys-1492 and Lys-1509. Residues 1509 to 1531 are disordered; it reads KASKHSSEISSEPGDDEEPTEGS. WD repeat units follow at residues 1534–1573, 1575–1618, 1659–1700, 1703–1742, 1743–1780, and 1783–1820; these read GHQA…GVFE, HTSK…EQLQ, HGPR…LLRT, GHSK…RIYK, GHNH…RLQV, and GHKD…NYRC. Lys-1590 participates in a covalent cross-link: Glycyl lysine isopeptide (Lys-Gly) (interchain with G-Cter in SUMO2). Lys-1742 is covalently cross-linked (Glycyl lysine isopeptide (Lys-Gly) (interchain with G-Cter in SUMO2)). The segment at 1818 to 1843 adopts a C2H2-type 3; atypical zinc-finger fold; it reads YRCWWYGCTLIFGVVDHLKQHLLTDH. Residue Lys-1869 forms a Glycyl lysine isopeptide (Lys-Gly) (interchain with G-Cter in SUMO2) linkage.

Interacts with KNOP1. Interacts with TARDBP and NUP107. Interacts (via N-terminus) with RBM39. Interacts with the SH3 domains of FYN and GRB2. Post-translationally, phosphorylated by FYN in vitro. In terms of tissue distribution, widely expressed, with strongest expression in skeletal muscle, heart and brain (at protein level). Detected in spinal cord motor neurons.

It is found in the nucleus. The protein localises to the nucleolus. Its subcellular location is the nucleus speckle. RNA-binding protein. Specifically binds to 5'-GGGGCC-3' sequence repeats in RNA. Essential for maintenance of peripheral motor neuron and skeletal muscle function. Required for normal expression and/or alternative splicing of a number of genes in spinal cord and skeletal muscle, including the neurite outgrowth inhibitor RTN4. Also contributes to normal mitochondrial respiratory function in motor neurons, via an unknown mechanism. The polypeptide is Zinc finger protein 106 (Znf106) (Mus musculus (Mouse)).